The primary structure comprises 275 residues: 2,3,4,5-tetrahydropyridine-2,6-dicarboxylate N-succinyltransferase (275 aa).

The protein belongs to the transferase hexapeptide repeat family.

Its subcellular location is the cytoplasm. It carries out the reaction (S)-2,3,4,5-tetrahydrodipicolinate + succinyl-CoA + H2O = (S)-2-succinylamino-6-oxoheptanedioate + CoA. It functions in the pathway amino-acid biosynthesis; L-lysine biosynthesis via DAP pathway; LL-2,6-diaminopimelate from (S)-tetrahydrodipicolinate (succinylase route): step 1/3. The protein is 2,3,4,5-tetrahydropyridine-2,6-dicarboxylate N-succinyltransferase of Ralstonia pickettii (strain 12J).